The following is an 845-amino-acid chain: ATPase morc-1 (845 aa).

Residues asparagine 43, 88-90 (SAK), and 97-103 (RYGNGLK) contribute to the ATP site. Asparagine 43 contributes to the Mg(2+) binding site. The stretch at 284 to 311 (AAYNKILDEKNETVKKCEEEKALVMSEI) forms a coiled coil. Lysine 422 lines the ATP pocket. Disordered stretches follow at residues 566–590 (LPQKRLTNSAPSSSDSQNSIRSASS) and 628–739 (KMEP…GKAV). The segment covering 574–590 (SAPSSSDSQNSIRSASS) has biased composition (low complexity). The span at 637 to 646 (HDSHIAEVQR) shows a compositional bias: basic and acidic residues.

As to quaternary structure, predominantly forms monomers and dimers, but multimerizes to form trimers and tetramers upon DNA binding. As to expression, expressed in germline and somatic cells.

It is found in the nucleus. The protein localises to the nuclear body. The catalysed reaction is ATP + H2O = ADP + phosphate + H(+). Binds non-specifically to DNA and forms static foci which grow by recruiting other morc-1 molecules, and thereby stimulates conformational changes and compaction of DNA, which appears to be enhanced by ATP-binding, but does not require ATP activity. Preferentially binds to long DNAs. Compacts and entraps segments of DNA by sequentially forming loops along the DNA, beginning at the free ends of single- and double-tethered DNA. Does not extrude the DNA loops on compacted double-tethered DNA. Involved in gene silencing. Plays a role in germline RNA interference (RNAi), and in particular, the silencing of endogenous small interfering RNA (endo-siRNA) target genes. May play a role in heterochromatin localization and condensation, and the siRNAi-directed trimethylation of 'Lys-9' of histone H3 in hermaphrodite X chromosomes. Promotes transgenerational epigenetic inheritance and germline immortality. This chain is ATPase morc-1, found in Caenorhabditis elegans.